A 756-amino-acid polypeptide reads, in one-letter code: U3 small nucleolar RNA-associated protein 14 homolog B (756 aa).

The tract at residues Asp21–Gln44 is disordered. Ser29, Ser31, and Ser37 each carry phosphoserine. Coiled coils occupy residues Ser215–Lys244 and Pro316–Glu345. Basic and acidic residues-rich tracts occupy residues Lys419–Asp428 and Leu452–Glu468. 2 disordered regions span residues Lys419–Glu468 and Gln497–Lys539. Residues Leu449–Glu476 are a coiled coil. At Ser554 the chain carries Phosphoserine.

This sequence belongs to the UTP14 family. In terms of tissue distribution, expressed predominantly in germ cells of the testis; weakly expressed in brain.

The protein resides in the nucleus. The protein localises to the nucleolus. Functionally, essential for spermatogenesis. May be required specifically for ribosome biogenesis and hence protein synthesis during male meiosis. The chain is U3 small nucleolar RNA-associated protein 14 homolog B (Utp14b) from Mus musculus (Mouse).